The chain runs to 163 residues: 2-C-methyl-D-erythritol 2,4-cyclodiphosphate synthase (163 aa).

Residues Asp12 and His14 each contribute to the a divalent metal cation site. Residues 12 to 14 and 38 to 39 each bind 4-CDP-2-C-methyl-D-erythritol 2-phosphate; these read DVH and HS. His46 is an a divalent metal cation binding site. 4-CDP-2-C-methyl-D-erythritol 2-phosphate-binding positions include 60–62, 136–139, Phe143, and Arg146; these read DIG and TTSE.

It belongs to the IspF family. In terms of assembly, homotrimer. Requires a divalent metal cation as cofactor.

It catalyses the reaction 4-CDP-2-C-methyl-D-erythritol 2-phosphate = 2-C-methyl-D-erythritol 2,4-cyclic diphosphate + CMP. Its pathway is isoprenoid biosynthesis; isopentenyl diphosphate biosynthesis via DXP pathway; isopentenyl diphosphate from 1-deoxy-D-xylulose 5-phosphate: step 4/6. In terms of biological role, involved in the biosynthesis of isopentenyl diphosphate (IPP) and dimethylallyl diphosphate (DMAPP), two major building blocks of isoprenoid compounds. Catalyzes the conversion of 4-diphosphocytidyl-2-C-methyl-D-erythritol 2-phosphate (CDP-ME2P) to 2-C-methyl-D-erythritol 2,4-cyclodiphosphate (ME-CPP) with a corresponding release of cytidine 5-monophosphate (CMP). This Xanthomonas oryzae pv. oryzae (strain MAFF 311018) protein is 2-C-methyl-D-erythritol 2,4-cyclodiphosphate synthase.